We begin with the raw amino-acid sequence, 224 residues long: Germin-like protein 8-12 (224 aa).

The N-terminal stretch at 1–23 (MASSSLFLLGALLVLASWQAIVA) is a signal peptide. Cysteines 33 and 48 form a disulfide. Residues 60–213 (FNAAKFDMPR…AFQVEKKLID (154 aa)) enclose the Cupin type-1 domain. N78 is a glycosylation site (N-linked (GlcNAc...) asparagine). Residues H111, H113, E118, and H158 each contribute to the Mn(2+) site.

Belongs to the germin family. Oligomer (believed to be a pentamer but probably hexamer).

It is found in the secreted. The protein localises to the extracellular space. Its subcellular location is the apoplast. Functionally, plays a role in broad-spectrum disease resistance. Probably has no oxalate oxidase activity even if the active site is conserved. The protein is Germin-like protein 8-12 of Oryza sativa subsp. japonica (Rice).